The sequence spans 79 residues: RNA-binding protein Hfq (79 aa).

Positions 10 to 69 (DPFLNALRKEHVPVSIYLVNGIKLQGNIESFDQYVVLLRNTVTQMVYKHAISTVVPARPV) constitute a Sm domain.

It belongs to the Hfq family. In terms of assembly, homohexamer.

Functionally, RNA chaperone that binds small regulatory RNA (sRNAs) and mRNAs to facilitate mRNA translational regulation in response to envelope stress, environmental stress and changes in metabolite concentrations. Also binds with high specificity to tRNAs. This is RNA-binding protein Hfq from Burkholderia cenocepacia (strain HI2424).